The chain runs to 101 residues: CRISPR-associated endoribonuclease Cas2 (101 aa).

Asp8 serves as a coordination point for Mg(2+).

This sequence belongs to the CRISPR-associated endoribonuclease Cas2 protein family. Homodimer, forms a heterotetramer with a Cas1 homodimer. Mg(2+) is required as a cofactor.

In terms of biological role, CRISPR (clustered regularly interspaced short palindromic repeat), is an adaptive immune system that provides protection against mobile genetic elements (viruses, transposable elements and conjugative plasmids). CRISPR clusters contain sequences complementary to antecedent mobile elements and target invading nucleic acids. CRISPR clusters are transcribed and processed into CRISPR RNA (crRNA). Functions as a ssRNA-specific endoribonuclease. Involved in the integration of spacer DNA into the CRISPR cassette. The polypeptide is CRISPR-associated endoribonuclease Cas2 (Lacticaseibacillus rhamnosus (strain ATCC 53103 / LMG 18243 / GG) (Lactobacillus rhamnosus)).